The primary structure comprises 843 residues: Pentatricopeptide repeat-containing protein At4g21880, mitochondrial (843 aa).

7 PPR repeats span residues 392-426, 427-461, 462-496, 497-531, 532-562, 564-594, and 598-632; these read SSTS…GLVI, SANI…SVKP, NSET…NLAP, NSSM…DVKP, DSVT…AGVE, NKHV…LEVP, and HNEL…RCPV.

It belongs to the PPR family. P subfamily.

Its subcellular location is the mitochondrion. The chain is Pentatricopeptide repeat-containing protein At4g21880, mitochondrial from Arabidopsis thaliana (Mouse-ear cress).